The sequence spans 427 residues: Glucan 1,3-beta-glucosidase 2 (427 aa).

An N-terminal signal peptide occupies residues 1–17; the sequence is MLISTFIISSLLSIALA. Glutamate 217 (proton donor) is an active-site residue. 2 disulfide bridges follow: cysteine 299–cysteine 426 and cysteine 324–cysteine 355. The Nucleophile role is filled by glutamate 316.

The protein belongs to the glycosyl hydrolase 5 (cellulase A) family.

It is found in the secreted. The catalysed reaction is Successive hydrolysis of beta-D-glucose units from the non-reducing ends of (1-&gt;3)-beta-D-glucans, releasing alpha-glucose.. In terms of biological role, beta-glucanases participate in the metabolism of beta-glucan, the main structural component of the cell wall. It could also function biosynthetically as a transglycosylase. The polypeptide is Glucan 1,3-beta-glucosidase 2 (EXG2) (Wickerhamomyces anomalus (Yeast)).